The following is a 254-amino-acid chain: Thiazole synthase (254 aa).

Catalysis depends on Lys-95, which acts as the Schiff-base intermediate with DXP. Residues Gly-156, 182–183, and 204–205 contribute to the 1-deoxy-D-xylulose 5-phosphate site; these read AG and NT.

It belongs to the ThiG family. As to quaternary structure, homotetramer. Forms heterodimers with either ThiH or ThiS.

The protein localises to the cytoplasm. The enzyme catalyses [ThiS sulfur-carrier protein]-C-terminal-Gly-aminoethanethioate + 2-iminoacetate + 1-deoxy-D-xylulose 5-phosphate = [ThiS sulfur-carrier protein]-C-terminal Gly-Gly + 2-[(2R,5Z)-2-carboxy-4-methylthiazol-5(2H)-ylidene]ethyl phosphate + 2 H2O + H(+). It functions in the pathway cofactor biosynthesis; thiamine diphosphate biosynthesis. Catalyzes the rearrangement of 1-deoxy-D-xylulose 5-phosphate (DXP) to produce the thiazole phosphate moiety of thiamine. Sulfur is provided by the thiocarboxylate moiety of the carrier protein ThiS. In vitro, sulfur can be provided by H(2)S. This chain is Thiazole synthase, found in Shewanella putrefaciens (strain CN-32 / ATCC BAA-453).